The sequence spans 435 residues: 3-phosphoshikimate 1-carboxyvinyltransferase (435 aa).

Lysine 15, serine 16, and arginine 20 together coordinate 3-phosphoshikimate. Lysine 15 serves as a coordination point for phosphoenolpyruvate. Residues glycine 96 and arginine 124 each contribute to the phosphoenolpyruvate site. Residues serine 169, glutamine 171, serine 195, aspartate 318, and lysine 345 each coordinate 3-phosphoshikimate. Glutamine 171 contributes to the phosphoenolpyruvate binding site. Aspartate 318 serves as the catalytic Proton acceptor. Residues arginine 349 and arginine 393 each coordinate phosphoenolpyruvate.

It belongs to the EPSP synthase family. Monomer.

The protein localises to the cytoplasm. The enzyme catalyses 3-phosphoshikimate + phosphoenolpyruvate = 5-O-(1-carboxyvinyl)-3-phosphoshikimate + phosphate. It participates in metabolic intermediate biosynthesis; chorismate biosynthesis; chorismate from D-erythrose 4-phosphate and phosphoenolpyruvate: step 6/7. In terms of biological role, catalyzes the transfer of the enolpyruvyl moiety of phosphoenolpyruvate (PEP) to the 5-hydroxyl of shikimate-3-phosphate (S3P) to produce enolpyruvyl shikimate-3-phosphate and inorganic phosphate. In Chlorobium chlorochromatii (strain CaD3), this protein is 3-phosphoshikimate 1-carboxyvinyltransferase.